A 426-amino-acid chain; its full sequence is Serine hydroxymethyltransferase (426 aa).

(6S)-5,6,7,8-tetrahydrofolate contacts are provided by residues L121 and 125 to 127; that span reads GHL. Residue K230 is modified to N6-(pyridoxal phosphate)lysine. 354 to 356 lines the (6S)-5,6,7,8-tetrahydrofolate pocket; the sequence is SPF.

The protein belongs to the SHMT family. Homodimer. It depends on pyridoxal 5'-phosphate as a cofactor.

The protein localises to the cytoplasm. It carries out the reaction (6R)-5,10-methylene-5,6,7,8-tetrahydrofolate + glycine + H2O = (6S)-5,6,7,8-tetrahydrofolate + L-serine. Its pathway is one-carbon metabolism; tetrahydrofolate interconversion. It functions in the pathway amino-acid biosynthesis; glycine biosynthesis; glycine from L-serine: step 1/1. Functionally, catalyzes the reversible interconversion of serine and glycine with tetrahydrofolate (THF) serving as the one-carbon carrier. This reaction serves as the major source of one-carbon groups required for the biosynthesis of purines, thymidylate, methionine, and other important biomolecules. Also exhibits THF-independent aldolase activity toward beta-hydroxyamino acids, producing glycine and aldehydes, via a retro-aldol mechanism. The sequence is that of Serine hydroxymethyltransferase from Acaryochloris marina (strain MBIC 11017).